Reading from the N-terminus, the 502-residue chain is Cytochrome P450 2J3 (502 aa).

C448 serves as a coordination point for heme.

It belongs to the cytochrome P450 family. Requires heme as cofactor. In terms of tissue distribution, abundantly expressed in heart and liver.

The protein localises to the endoplasmic reticulum membrane. The protein resides in the microsome membrane. It catalyses the reaction an organic molecule + reduced [NADPH--hemoprotein reductase] + O2 = an alcohol + oxidized [NADPH--hemoprotein reductase] + H2O + H(+). This enzyme metabolizes arachidonic acid predominantly via a NADPH-dependent olefin epoxidation mainly to 14,15-, 11,12-, and 8,9-epoxyeicosatrienoic acids (EET). It also acts as an omega-1-hydroxylase by metabolizing arachidonic acid to 19-hydroxyeicosatetraenoic acid (19-OH-AA). In Rattus norvegicus (Rat), this protein is Cytochrome P450 2J3 (Cyp2j3).